The chain runs to 66 residues: Large ribosomal subunit protein bL35 (66 aa).

Over residues 1–26 (MPKMKTHRGAAKRVKRTGSGKLKRSR) the composition is skewed to basic residues. The tract at residues 1 to 49 (MPKMKTHRGAAKRVKRTGSGKLKRSRAFTSHLFANKSTKQKRKLRKASL) is disordered.

It belongs to the bacterial ribosomal protein bL35 family.

This Staphylococcus saprophyticus subsp. saprophyticus (strain ATCC 15305 / DSM 20229 / NCIMB 8711 / NCTC 7292 / S-41) protein is Large ribosomal subunit protein bL35.